The chain runs to 396 residues: Phospholipase A1-II 4 (396 aa).

The active-site Acyl-ester intermediate is Ser-221. Catalysis depends on charge relay system residues Ser-221, Asp-282, and His-319.

Belongs to the AB hydrolase superfamily. Lipase family.

The protein resides in the cytoplasm. Acylhydrolase that catalyzes the hydrolysis of phospholipids at the sn-1 position. The protein is Phospholipase A1-II 4 of Oryza sativa subsp. japonica (Rice).